Reading from the N-terminus, the 354-residue chain is Uroporphyrinogen decarboxylase (354 aa).

Residues R27–R31, D77, Y154, T209, and H327 each bind substrate.

This sequence belongs to the uroporphyrinogen decarboxylase family. In terms of assembly, homodimer.

The protein resides in the cytoplasm. It carries out the reaction uroporphyrinogen III + 4 H(+) = coproporphyrinogen III + 4 CO2. Its pathway is porphyrin-containing compound metabolism; protoporphyrin-IX biosynthesis; coproporphyrinogen-III from 5-aminolevulinate: step 4/4. Catalyzes the decarboxylation of four acetate groups of uroporphyrinogen-III to yield coproporphyrinogen-III. The sequence is that of Uroporphyrinogen decarboxylase from Histophilus somni (strain 129Pt) (Haemophilus somnus).